Consider the following 502-residue polypeptide: ATP synthase subunit alpha (502 aa).

The disordered stretch occupies residues glycine 119 to arginine 139. Position 169–176 (glycine 169–threonine 176) interacts with ATP.

It belongs to the ATPase alpha/beta chains family. F-type ATPases have 2 components, CF(1) - the catalytic core - and CF(0) - the membrane proton channel. CF(1) has five subunits: alpha(3), beta(3), gamma(1), delta(1), epsilon(1). CF(0) has three main subunits: a(1), b(2) and c(9-12). The alpha and beta chains form an alternating ring which encloses part of the gamma chain. CF(1) is attached to CF(0) by a central stalk formed by the gamma and epsilon chains, while a peripheral stalk is formed by the delta and b chains.

The protein resides in the cell membrane. It catalyses the reaction ATP + H2O + 4 H(+)(in) = ADP + phosphate + 5 H(+)(out). Functionally, produces ATP from ADP in the presence of a proton gradient across the membrane. The alpha chain is a regulatory subunit. The sequence is that of ATP synthase subunit alpha from Alkalihalophilus pseudofirmus (strain ATCC BAA-2126 / JCM 17055 / OF4) (Bacillus pseudofirmus).